Reading from the N-terminus, the 940-residue chain is Serine/threonine-protein phosphatase 1 regulatory subunit 10 (940 aa).

The tract at residues M1–E348 is interaction with TOX4. The 75-residue stretch at K73 to Q147 folds into the TFIIS N-terminal domain. Disordered stretches follow at residues Q147–S210, N248–P270, K304–T400, and V534–V557. 2 stretches are compositionally biased toward basic and acidic residues: residues A153–S166 and P174–K196. Residue K179 forms a Glycyl lysine isopeptide (Lys-Gly) (interchain with G-Cter in SUMO2) linkage. T256 is subject to Phosphothreonine. A Glycyl lysine isopeptide (Lys-Gly) (interchain with G-Cter in SUMO2) cross-link involves residue K262. S313 carries the phosphoserine modification. The span at K325–S336 shows a compositional bias: low complexity. The segment at P357–A433 is necessary for interaction with PPP1CA. S382 is modified (phosphoserine). Residues G393–R408 are necessary for interaction with PPP1CC. The short motif at R394 to V423 is the PP1-binding motif element. S398 is modified (phosphoserine; by PKA). The tract at residues T418 to L619 is interaction with WDR82. Over residues G540–G551 the composition is skewed to gly residues. Residues S545 and S591 each carry the phosphoserine modification. The interval H617–D905 is disordered. A compositionally biased stretch (pro residues) spans P644 to H655. Position 665 is an omega-N-methylarginine (R665). Residues G676–G690 show a composition bias toward low complexity. An omega-N-methylarginine mark is found at R693 and R738. 2 stretches are compositionally biased toward gly residues: residues A725 to N763 and G789 to G844. Basic and acidic residues-rich tracts occupy residues P861–P886 and R894–G903. The C3H1-type zinc finger occupies M906–V934.

In terms of assembly, component of the PNUTS-PP1 complex (also named PTW/PP1 complex), composed of PPP1R10/PNUTS, TOX4, WDR82, and PPP1CA (or PPP1CB or PPP1CC). Phosphorylated on Ser-398 by PKA within the region necessary for interaction with PPP1CA.

Its subcellular location is the nucleus. It is found in the chromosome. Substrate-recognition component of the PNUTS-PP1 protein phosphatase complex, a protein phosphatase 1 (PP1) complex that promotes RNA polymerase II transcription pause-release, allowing transcription elongation. Promoter-proximal pausing by RNA polymerase II is a transcription halt following transcription initiation but prior to elongation, which acts as a checkpoint to control that transcripts are favorably configured for transcriptional elongation. The PNUTS-PP1 complex mediates the release of RNA polymerase II from promoter-proximal region of genes by catalyzing dephosphorylation of proteins involved in transcription, such as AFF4, CDK9, MEPCE, INTS12, NCBP1, POLR2M/GDOWN1 and SUPT6H. The PNUTS-PP1 complex also regulates RNA polymerase II transcription termination by mediating dephosphorylation of SUPT5H in termination zones downstream of poly(A) sites, thereby promoting deceleration of RNA polymerase II transcription. PNUTS-PP1 complex is also involved in the response to replication stress by mediating dephosphorylation of POLR2A at 'Ser-5' of the CTD, promoting RNA polymerase II degradation. The PNUTS-PP1 complex also plays a role in the control of chromatin structure and cell cycle progression during the transition from mitosis into interphase. PNUTS-PP1 complex mediates dephosphorylation of MYC, promoting MYC stability by preventing MYC ubiquitination by the SCF(FBXW7) complex. In addition to acts as a substrate-recognition component, PPP1R10/PNUTS also acts as a nuclear targeting subunit for the PNUTS-PP1 complex. In some context, PPP1R10/PNUTS also acts as an inhibitor of protein phosphatase 1 (PP1) activity by preventing access to substrates, such as RB. The chain is Serine/threonine-protein phosphatase 1 regulatory subunit 10 (PPP1R10) from Pan troglodytes (Chimpanzee).